A 418-amino-acid polypeptide reads, in one-letter code: MINQSIWRSNFRILWLSQFIAIAGLTVLVPLLPIYMASLQNLSVVEIQLWSGIAIAAPAVTTMIASPIWGKLGDKISRKWMVLRALLGLAVCLFLMALCTTPLQFVLVRLLQGLFGGVVDASSAFASAEAPAEDRGKVLGRLQSSVSAGSLVGPLIGGVTASILGFSALLMSIAVITFIVCIFGALKLIETTHMPKSQTPNINKGIRRSFQCLLCTQQTCRFIIVGVLANFAMYGMLTALSPLASSVNHTAIDDRSVIGFLQSAFWTASILSAPLWGRFNDKSYVKSVYIFATIACGCSAILQGLATNIEFLMAARILQGLTYSALIQSVMFVVVNACHQQLKGTFVGTTNSMLVVGQIIGSLSGAAITSYTTPATTFIVMGVVFAVSSLFLICSTITNQINDHTLMKLWELKQKSAK.

10 consecutive transmembrane segments (helical) span residues 19–39 (FIAI…MASL), 49–69 (LWSG…SPIW), 88–108 (GLAV…FVLV), 163–183 (ILGF…VCIF), 222–242 (FIIV…ALSP), 257–277 (VIGF…PLWG), 287–307 (SVYI…GLAT), 317–337 (ILQG…VVNA), 353–373 (MLVV…SYTT), and 377–397 (TFIV…CSTI).

It belongs to the major facilitator superfamily.

It localises to the cell membrane. Functionally, involved in staphyloferrin B secretion. This chain is Staphyloferrin B transporter, found in Staphylococcus aureus (strain NCTC 8325 / PS 47).